A 34-amino-acid polypeptide reads, in one-letter code: Chlorotoxin-like peptide AaCtx (34 aa).

Disulfide bonds link C2–C19, C5–C27, C16–C32, and C20–C34.

Belongs to the short scorpion toxin superfamily. Chloride channel inhibitor family. Expressed by the venom gland.

Its subcellular location is the secreted. In terms of biological role, toxin with unknown function in healthy organisms. On glioma cells, interacts with chloride channels (probably ClC-3/CLCN3) and MMP2 at the surface of glioma cells. This complex is then internalized via caveolae, thus inhibiting the chloride channels necessary for cell shrinkage and tumor propagation. Inhibits migration and invasion of U87 glioma cells expressing CLCN3/ClC-3 voltage-gated chloride channels. The polypeptide is Chlorotoxin-like peptide AaCtx (Androctonus australis (Sahara scorpion)).